The sequence spans 434 residues: Trigger factor (434 aa).

The PPIase FKBP-type domain occupies 163–248 (GDTAVIDFAG…VHDIKRKELP (86 aa)).

Belongs to the FKBP-type PPIase family. Tig subfamily.

The protein localises to the cytoplasm. The catalysed reaction is [protein]-peptidylproline (omega=180) = [protein]-peptidylproline (omega=0). Its function is as follows. Involved in protein export. Acts as a chaperone by maintaining the newly synthesized protein in an open conformation. Functions as a peptidyl-prolyl cis-trans isomerase. In Shouchella clausii (strain KSM-K16) (Alkalihalobacillus clausii), this protein is Trigger factor.